A 486-amino-acid chain; its full sequence is Patatin-like phospholipase domain-containing protein 2 (486 aa).

Topologically, residues 1–8 (MFPRETKW) are cytoplasmic. The chain crosses the membrane as a helical span at residues 9-29 (NISFAGCGFLGVYHIGVASCL). Positions 10-179 (ISFAGCGFLG…SDNLPLYELK (170 aa)) constitute a PNPLA domain. Positions 14-19 (GCGFLG) match the GXGXXG motif. The Extracellular segment spans residues 30-42 (REHAPFLVANATH). Asn39 carries an N-linked (GlcNAc...) asparagine glycan. A helical membrane pass occupies residues 43 to 63 (IYGASAGALTATALVTGACLG). Positions 45 to 49 (GASAG) match the GXSXG motif. The active-site Nucleophile is the Ser47. Residues 64–137 (EAGANIIEVS…IISHFSSKDE (74 aa)) are Cytoplasmic-facing. Lys92 participates in a covalent cross-link: Glycyl lysine isopeptide (Lys-Gly) (interchain with G-Cter in ubiquitin). The helical transmembrane segment at 138-158 (LIQANVCSTFIPVYCGLIPPT) threads the bilayer. At 159-331 (LQGVRYVDGG…TTLSNMLPVR (173 aa)) the chain is on the extracellular side. Asp166 serves as the catalytic Proton acceptor. The DGA/G signature appears at 166-168 (DGG). A helical membrane pass occupies residues 332-352 (LATAMMVPYTLPLESAVSFTI). Over 353 to 486 (RLLEWLPDVP…PQDPPGLPPC (134 aa)) the chain is Cytoplasmic. The residue at position 374 (Ser374) is a Phosphoserine; in vitro. Residues Ser396 and Ser406 each carry the phosphoserine; by PKA modification. 2 positions are modified to phosphoserine; in vitro: Ser430 and Ser468. Low complexity predominate over residues 465–476 (APASPTAADPAT). Positions 465–486 (APASPTAADPATPQDPPGLPPC) are disordered. Residues 477 to 486 (PQDPPGLPPC) show a composition bias toward pro residues.

As to quaternary structure, interacts with ABHD5; this association stimulates PNPLA2 triglyceride hydrolase activity. Interacts with SERPINF1; this interaction stimulates the phospholipase A2 activity of PNPLA2. Despite a colocalization in lipid droplets, it probably does not interact with PLIN. Interacts with PLIN5; prevents interaction with ABHD5. Interacts with FAF2. In terms of processing, phosphorylation at Ser-406 by PKA is increased during fasting and moderate intensity exercise, and moderately increases lipolytic activity. Ubiquitinated by PEX2 in response to reactive oxygen species (ROS), leading to its degradation. Ubiquitination is stimulated by LDAH. As to expression, expressed at high levels in white and brown adipose tissue, and to a lesser degree in testis and cardiac muscle. Barely detected in liver, spleen, thymus, kidney, skeletal muscle, and brain. Among the white adipose depots, gonadal fat showed the highest level of expression compared with inguinal and renal white adipose tissues.

It localises to the lipid droplet. The protein resides in the cell membrane. It is found in the cytoplasm. The catalysed reaction is a triacylglycerol + H2O = a diacylglycerol + a fatty acid + H(+). The enzyme catalyses a triacylglycerol + H2O = a 1,2-diacylglycerol + a fatty acid + H(+). It catalyses the reaction a triacylglycerol + H2O = a 1,3-diacylglycerol + a fatty acid + H(+). It carries out the reaction a triacyl-sn-glycerol + H2O = a 2,3-diacyl-sn-glycerol + a fatty acid + H(+). The catalysed reaction is a triacyl-sn-glycerol + H2O = a 1,3-diacyl-sn-glycerol + a fatty acid + H(+). The enzyme catalyses 1,2,3-tri-(9Z-octadecenoyl)-glycerol + H2O = 1,3-di-(9Z-octadecenoyl)-glycerol + (9Z)-octadecenoate + H(+). It catalyses the reaction 1,2,3-tri-(9Z)-hexadecenoylglycerol + H2O = 1,3-di-(9Z)-hexadecenoylglycerol + (9Z)-hexadecenoate + H(+). It carries out the reaction 1,2,3-tri-(9Z,12Z)-octadecadienoylglycerol + H2O = 1,3-di-(9Z,12Z)-octadecadienoylglycerol + (9Z,12Z)-octadecadienoate + H(+). The catalysed reaction is 1,2,3-tri-(9Z,12Z,15Z)-octadecatrienoylglycerol + H2O = 1,3-di-(9Z,12Z,15Z)-octadecatrienoylglycerol + (9Z,12Z,15Z)-octadecatrienoate + H(+). The enzyme catalyses 1,3-di-(9Z)-octadecenoyl-2-hexadecanoylglycerol + H2O = 1,3-di-(9Z-octadecenoyl)-glycerol + hexadecanoate + H(+). It catalyses the reaction 1,2-di-(9Z)-octadecenoyl-3-hexadecanoyl-sn-glycerol + H2O = 1-(9Z)-octadecenoyl-3-hexadecanoyl-sn-glycerol + (9Z)-octadecenoate + H(+). It carries out the reaction 1-hexadecanoyl-2,3-di-(9Z)-octadecenoyl-sn-glycerol + H2O = 1-hexadecanoyl-3-(9Z)-octadecenoyl-sn-glycerol + (9Z)-octadecenoate + H(+). The catalysed reaction is 1,2,3-tri-(9Z-octadecenoyl)-glycerol + H2O = 2,3-di-(9Z)-octadecenoyl-sn-glycerol + (9Z)-octadecenoate + H(+). The enzyme catalyses 1,2,3-tri-(9Z)-hexadecenoylglycerol + H2O = 2,3-di-(9Z)-hexadecenoyl-sn-glycerol + (9Z)-hexadecenoate + H(+). It catalyses the reaction 1,2,3-tri-(9Z,12Z)-octadecadienoylglycerol + H2O = 2,3-di-(9Z,12Z)-octadecadienoyl-sn-glycerol + (9Z,12Z)-octadecadienoate + H(+). It carries out the reaction 1,2,3-tri-(9Z,12Z,15Z)-octadecatrienoylglycerol + H2O = 2,3-di-(9Z,12Z,15Z)-octadecatrienoyl-sn-glycerol + (9Z,12Z,15Z)-octadecatrienoate + H(+). The catalysed reaction is 1,3-di-(9Z)-octadecenoyl-2-hexadecanoylglycerol + H2O = 2-hexadecanoyl-3-(9Z)-octadecenoyl-sn-glycerol + (9Z)-octadecenoate + H(+). The enzyme catalyses 1-hexadecanoyl-2,3-di-(9Z)-octadecenoyl-sn-glycerol + H2O = 2,3-di-(9Z)-octadecenoyl-sn-glycerol + hexadecanoate + H(+). It catalyses the reaction 1,2-di-(9Z)-octadecenoyl-3-hexadecanoyl-sn-glycerol + H2O = 2-(9Z-octadecenoyl)-3-hexadecanoyl-sn-glycerol + (9Z)-octadecenoate + H(+). It carries out the reaction 1,2-di-(9Z-octadecenoyl)-glycerol + (9Z)-octadecenoate + H(+) = 1,2,3-tri-(9Z-octadecenoyl)-glycerol + H2O. The catalysed reaction is a 1-acylglycerol + a 1,3-diacylglycerol = a triacylglycerol + glycerol. The enzyme catalyses a 1-acylglycerol + a 1,2-diacylglycerol = a triacylglycerol + glycerol. It catalyses the reaction 2 a 1-acylglycerol = a 1,2-diacylglycerol + glycerol. It carries out the reaction a triacylglycerol + all-trans-retinol = an all-trans-retinyl ester + a diacylglycerol. The catalysed reaction is 1-(9Z-octadecenoyl)-glycerol + 1,3-di-(9Z-octadecenoyl)-glycerol = 1,2,3-tri-(9Z-octadecenoyl)-glycerol + glycerol. The enzyme catalyses 1-(9Z-octadecenoyl)-glycerol + 1,2-di-(9Z-octadecenoyl)-glycerol = 1,2,3-tri-(9Z-octadecenoyl)-glycerol + glycerol. It catalyses the reaction 2 1-(9Z-octadecenoyl)-glycerol = 1,2-di-(9Z-octadecenoyl)-glycerol + glycerol. It carries out the reaction 1,2,3-tri-(9Z-octadecenoyl)-glycerol + all-trans-retinol = all-trans-retinyl 9Z-octadecenoate + di-(9Z)-octadecenoylglycerol. The catalysed reaction is a 1,2-diacyl-sn-glycero-3-phosphocholine + H2O = a 1-acyl-sn-glycero-3-phosphocholine + a fatty acid + H(+). The enzyme catalyses 1,2,3-tri-(9Z-octadecenoyl)-glycerol + 9-hydroxy-octadecanoate = 9-(9Z-octadecenoyloxy)-octadecanoate + 2,3-di-(9Z)-octadecenoyl-sn-glycerol. It catalyses the reaction 1-hexadecanoyl-2,3-di-(9Z)-octadecenoyl-sn-glycerol + 9-hydroxy-octadecanoate = 9-hexadecanoyloxy-octadecanoate + 2,3-di-(9Z)-octadecenoyl-sn-glycerol. It carries out the reaction 1,2,3-tri-(10Z)-heptadecenoylglycerol + 9-hydroxy-octadecanoate = 2,3-di-(10Z-heptadecenoyl)-sn-glycerol + 9-(10Z-heptadecenoyloxy)-octadecanoate. The catalysed reaction is 1,2,3-tri-(9Z,12Z)-octadecadienoylglycerol + 9-hydroxy-octadecanoate = 2,3-di-(9Z,12Z)-octadecadienoyl-sn-glycerol + 9-(9Z,12Z-octadecadienoyloxy)-octadecanoate. The enzyme catalyses 1,2,3-tri-(9Z)-hexadecenoylglycerol + 9-hydroxy-octadecanoate = 2,3-di-(9Z)-hexadecenoyl-sn-glycerol + 9-(9Z-hexadecenoyloxy)-octadecanoate. It catalyses the reaction 9-hydroxy-octadecanoate + 1,2-di-(9Z-octadecenoyl)-sn-glycerol = 9-(9Z-octadecenoyloxy)-octadecanoate + 2-(9Z-octadecenoyl)-glycerol. It carries out the reaction 1-hexadecanoyl-2,3-di-(9Z)-octadecenoyl-sn-glycerol + 9-hydroxy-octadecanoate = 1-hexadecanoyl-3-(9Z)-octadecenoyl-sn-glycerol + 9-(9Z-octadecenoyloxy)-octadecanoate. The protein operates within glycerolipid metabolism; triacylglycerol degradation. Stimulated by PKA-dependent PLIN phosphorylation. Its function is as follows. Catalyzes the initial step in triglyceride hydrolysis in adipocyte and non-adipocyte lipid droplets. Exhibits a strong preference for the hydrolysis of long-chain fatty acid esters at the sn-2 position of the glycerol backbone and acts coordinately with LIPE/HLS and DGAT2 within the lipolytic cascade. Also possesses acylglycerol transacylase and phospholipase A2 activities. Transfers fatty acid from triglyceride to retinol, hydrolyzes retinylesters, and generates 1,3-diacylglycerol from triglycerides. Regulates adiposome size and may be involved in the degradation of adiposomes. Catalyzes the formation of an ester bond between hydroxy fatty acids and fatty acids derived from triglycerides or diglycerides to generate fatty acid esters of hydroxy fatty acids (FAHFAs) in adipocytes. Acts antagonistically with LDAH in regulation of cellular lipid stores. Inhibits LDAH-stimulated lipid droplet fusion. May play an important role in energy homeostasis. May play a role in the response of the organism to starvation, enhancing hydrolysis of triglycerides and providing free fatty acids to other tissues to be oxidized in situations of energy depletion. This chain is Patatin-like phospholipase domain-containing protein 2, found in Mus musculus (Mouse).